Consider the following 227-residue polypeptide: Uracil-DNA glycosylase (227 aa).

The Proton acceptor role is filled by D64.

This sequence belongs to the uracil-DNA glycosylase (UDG) superfamily. UNG family.

It localises to the cytoplasm. It carries out the reaction Hydrolyzes single-stranded DNA or mismatched double-stranded DNA and polynucleotides, releasing free uracil.. Its function is as follows. Excises uracil residues from the DNA which can arise as a result of misincorporation of dUMP residues by DNA polymerase or due to deamination of cytosine. This Erwinia tasmaniensis (strain DSM 17950 / CFBP 7177 / CIP 109463 / NCPPB 4357 / Et1/99) protein is Uracil-DNA glycosylase.